We begin with the raw amino-acid sequence, 536 residues long: Caspase recruitment domain-containing protein 9 (536 aa).

Ser2 carries the phosphoserine modification. Residues Asp3, Cys10, and His73 each coordinate Zn(2+). Residues 6 to 98 (NDDECWSVLE…QLYKKVTGKE (93 aa)) form the CARD domain. The linker stretch occupies residues 99–116 (PARVFSMIIDASGESGLT). Coiled-coil stretches lie at residues 117-277 (QLLM…DRSS) and 332-419 (LRKD…QQLE). Residue Lys125 forms a Glycyl lysine isopeptide (Lys-Gly) (interchain with G-Cter in ubiquitin) linkage. At Thr231 the chain carries Phosphothreonine. At Ser277 the chain carries Phosphoserine. Residues Ser424, Ser425, Ser431, Ser450, Ser460, Ser483, and Ser498 each carry the phosphoserine modification. The segment at 427 to 536 (LEDGSPRRSQ…GSDNTDTEGS (110 aa)) is disordered. A compositionally biased stretch (basic and acidic residues) spans 487-502 (PPEKERRRLKESFENY). Over residues 503–513 (RRKRALRKMQK) the composition is skewed to basic residues. Residues Thr531 and Thr533 each carry the phosphothreonine; by CK2 modification.

Monomer. Homodimer; homodimerization is mediated by the CARD domain which forms an extensive interaction with the adjacent linker and coiled-coil regions; leads to an autoinhibited state. Homomultimer; polymerizes following activation, forming a nucleating helical template that seeds BCL10-filament formation via a CARD-CARD interaction. Interacts (via CARD domain) with BCL10 (via CARD domain); interaction takes place following CARD9 activation and polymerization, leading to the formation of a filamentous CBM complex assembly. Component of a CBM complex (CARD9-BCL10, MALT1), composed of CARD9, BCL10 and MALT1. Interacts with RASGRF1. Interacts with NOD2 (via NACHT domain); interaction is direct. Interacts with RIPK2. Interacts with VHL; without leading to protein degradation. Phosphorylated at Thr-231 by PRKCD downstream of C-type lectin receptors activation: phosphorylation promotes interaction with BCL10, followed by activation of NF-kappa-B and MAP kinase p38 pathways. Phosphorylated at Thr-531 and Thr-533 by CK2 following interaction with VHL, leading to inhibit the ability to activate NF-kappa-B. Post-translationally, ubiquitinated at Lys-125 via 'Lys-27'-linked ubiquitin by TRIM62 downstream of C-type lectin receptors activation; leading to CARD9 activation, followed by activation of NF-kappa-B and MAP kinase p38 pathways. Deubiquitinated at Lys-125 by USP15, inhibiting CARD9. As to expression, expression is restricted to several populations of phagocytes, such as macrophages, monocytes, and dendritic cells. Highly expressed in spleen. Also detected in liver, placenta, lung, peripheral blood leukocytes and in brain.

Its subcellular location is the cytoplasm. Its activity is regulated as follows. Maintained in an autoinhibited state via homodimerization in which the CARD domain forms an extensive interaction with the adjacent linker and coiled-coil regions. Activation downstream of C-type lectin receptors, by phosphorylation by PRKCD and/or ubiquitination by TRIM62, triggers disruption of the CARD domain-coiled coil interface, CARD9 homooligomerization and BCL10 recruitment, followed by activation of NF-kappa-B and MAP kinase p38 pathways. Zinc-binding inhibits activation by stabilizing the CARD ground-state conformation and restricting its capacity to form BCL10-nucleating filaments. Functionally, adapter protein that plays a key role in innate immune response against fungi by forming signaling complexes downstream of C-type lectin receptors. CARD9-mediated signals are essential for antifungal immunity against a subset of fungi from the phylum Ascomycota. Transduces signals in myeloid cells downstream of C-type lectin receptors CLEC7A (dectin-1), CLEC6A (dectin-2) and CLEC4E (Mincle), which detect pathogen-associated molecular pattern metabolites (PAMPs), such as fungal carbohydrates, and trigger CARD9 activation. Upon activation, CARD9 homooligomerizes to form a nucleating helical template that recruits BCL10 via CARD-CARD interaction, thereby promoting polymerization of BCL10 and subsequent recruitment of MALT1: this leads to activation of NF-kappa-B and MAP kinase p38 (MAPK11, MAPK12, MAPK13 and/or MAPK14) pathways which stimulate expression of genes encoding pro-inflammatory cytokines and chemokines. CARD9 signaling in antigen-presenting cells links innate sensing of fungi to the activation of adaptive immunity and provides a cytokine milieu that induces the development and subsequent of interleukin 17-producing T helper (Th17) cells. Also involved in activation of myeloid cells via classical ITAM-associated receptors and TLR: required for TLR-mediated activation of MAPK, while it is not required for TLR-induced activation of NF-kappa-B. CARD9 can also be engaged independently of BCL10: forms a complex with RASGRF1 downstream of C-type lectin receptors, which recruits and activates HRAS, leading to ERK activation and the production of cytokines. Acts as an important regulator of the intestinal commensal fungi (mycobiota) component of the gut microbiota. Plays an essential role in antifungal immunity against dissemination of gut fungi: acts by promoting induction of antifungal IgG antibodies response in CX3CR1(+) macrophages to confer protection against disseminated C.albicans or C.auris infection. Also mediates immunity against other pathogens, such as certain bacteria, viruses and parasites; CARD9 signaling is however redundant with other innate immune responses. In response to L.monocytogenes infection, required for the production of inflammatory cytokines activated by intracellular peptidoglycan: acts by connecting NOD2 recognition of peptidoglycan to downstream activation of MAP kinases (MAPK) without activating NF-kappa-B. This is Caspase recruitment domain-containing protein 9 from Homo sapiens (Human).